The sequence spans 251 residues: Triosephosphate isomerase (251 aa).

Residue 9-11 coordinates substrate; it reads NWK. H93 (electrophile) is an active-site residue. E163 functions as the Proton acceptor in the catalytic mechanism. Substrate-binding positions include G169, S209, and 230–231; that span reads GG.

It belongs to the triosephosphate isomerase family. In terms of assembly, homodimer.

The protein resides in the cytoplasm. The enzyme catalyses D-glyceraldehyde 3-phosphate = dihydroxyacetone phosphate. Its pathway is carbohydrate biosynthesis; gluconeogenesis. It functions in the pathway carbohydrate degradation; glycolysis; D-glyceraldehyde 3-phosphate from glycerone phosphate: step 1/1. In terms of biological role, involved in the gluconeogenesis. Catalyzes stereospecifically the conversion of dihydroxyacetone phosphate (DHAP) to D-glyceraldehyde-3-phosphate (G3P). This Ruegeria pomeroyi (strain ATCC 700808 / DSM 15171 / DSS-3) (Silicibacter pomeroyi) protein is Triosephosphate isomerase.